The following is a 294-amino-acid chain: Glyceraldehyde-3-phosphate dehydrogenase (294 aa).

Aspartate 19, lysine 63, and threonine 105 together coordinate NAD(+). D-glyceraldehyde 3-phosphate is bound by residues 134-136 (SCT), threonine 165, 194-195 (TG), and arginine 217. Residue cysteine 135 is the Nucleophile of the active site.

The protein belongs to the glyceraldehyde-3-phosphate dehydrogenase family. As to quaternary structure, homotetramer.

The protein resides in the cytoplasm. The catalysed reaction is D-glyceraldehyde 3-phosphate + phosphate + NAD(+) = (2R)-3-phospho-glyceroyl phosphate + NADH + H(+). The protein operates within carbohydrate degradation; glycolysis; pyruvate from D-glyceraldehyde 3-phosphate: step 1/5. Functionally, catalyzes the oxidative phosphorylation of glyceraldehyde 3-phosphate (G3P) to 1,3-bisphosphoglycerate (BPG) using the cofactor NAD. The first reaction step involves the formation of a hemiacetal intermediate between G3P and a cysteine residue, and this hemiacetal intermediate is then oxidized to a thioester, with concomitant reduction of NAD to NADH. The reduced NADH is then exchanged with the second NAD, and the thioester is attacked by a nucleophilic inorganic phosphate to produce BPG. In Klebsiella aerogenes (Enterobacter aerogenes), this protein is Glyceraldehyde-3-phosphate dehydrogenase (gap).